The sequence spans 457 residues: Transcription termination factor Rho (457 aa).

The interval 1–23 (MNTTNKQLTEELNNTESNNDHND) is disordered. The 76-residue stretch at 77–152 (LIVGEGVLEV…LKVNRVNFED (76 aa)) folds into the Rho RNA-BD domain. Residues 200-205 (GKGQRA), 212-217 (RTGKTV), and Arg243 each bind ATP.

Belongs to the Rho family. As to quaternary structure, homohexamer. The homohexamer assembles into an open ring structure.

Functionally, facilitates transcription termination by a mechanism that involves Rho binding to the nascent RNA, activation of Rho's RNA-dependent ATPase activity, and release of the mRNA from the DNA template. In Rickettsia prowazekii (strain Madrid E), this protein is Transcription termination factor Rho.